We begin with the raw amino-acid sequence, 227 residues long: Translation initiation factor 6 (227 aa).

Belongs to the eIF-6 family.

Binds to the 50S ribosomal subunit and prevents its association with the 30S ribosomal subunit to form the 70S initiation complex. This chain is Translation initiation factor 6, found in Pyrococcus furiosus (strain ATCC 43587 / DSM 3638 / JCM 8422 / Vc1).